Consider the following 117-residue polypeptide: Large ribosomal subunit protein bL20 (117 aa).

It belongs to the bacterial ribosomal protein bL20 family.

Functionally, binds directly to 23S ribosomal RNA and is necessary for the in vitro assembly process of the 50S ribosomal subunit. It is not involved in the protein synthesizing functions of that subunit. This chain is Large ribosomal subunit protein bL20, found in Idiomarina loihiensis (strain ATCC BAA-735 / DSM 15497 / L2-TR).